Reading from the N-terminus, the 551-residue chain is MPKPWVVFGLGTLVLFLWRLNKIGRRPKNYPPGPPTLPLIGNLHLMPKKNAHLQFQRWAEEYGPVYSLMLGTKVAIVLSSDVAVKDLLDKRSSIYSGRPELYMGQEIMSGGNRPLFMGINSVWRRVRKLAHGLLNVKVSRTYVPYQDLESRDMLMGLLESPKDFLNHIRRYTTSLTTQMAFGYRTPSSDDKGLLEMFENFDELSRLTGSQSAAILDLYPIARILPDFLLPARRLGREYYEREKKLFMKHFLNARQQLNSGTSKPCCAIDLLRAQKEYGFSDEFGCYLSGSLLQAGSETTAIILTGFFQAMLVFPEVSKEAQEEIDRVCGDRLPDLNDYPNLPYIRACLKESLRWMPATALGVPHAVIQDDSYLGYHIPKDAGLILNVWAIHNDSKRHPDPRRYNPARWAGDNQNSAQAAVNPDPTKRDHFVFGAGRRLCQGMHIADRSLFLAISRTLWAFDLKRPVDKETGHEIIPDVDNIKDGLFISPMPFAADIVPRSESRAAAVRQEWENVAGLLDDDMQWKTVPEGLKWKDYEPLDDENEDLLESLS.

An N-terminal signal peptide occupies residues 1-25 (MPKPWVVFGLGTLVLFLWRLNKIGR). A glycan (N-linked (GlcNAc...) asparagine) is linked at Asn392. A heme-binding site is contributed by Cys439.

This sequence belongs to the cytochrome P450 family. Requires heme as cofactor.

Its pathway is secondary metabolite biosynthesis. In terms of biological role, cytochrome P450 monooxygenase; part of the gene cluster that mediates the biosynthesis of virensols and trichoxide, fungal natural products that contain or are derived from a salicylaldehyde core. The pathway begins with the synthesis of the reduced chain in virensol C by the highly reducing polyketide synthase virA via condensation of one acetate and 8 malonate units. VirA has interesting programming rules since the first 2 ketides are fully reduced, the 3 following ketides undergo beta-dehydration, and the last 3 ketides are only reduced to beta-hydroxys to yield the trihydroxy portion. The production of aldehyde virensol C by virA alone is surprising, since virA does not contain a reductase (R) domain that is typically associated with reductive product release in HRPKS. The cupin-domain enzyme virC is involved in enhancing virA product turnover. The short-chain dehydrogenase virB then oxidizes the C-7 alcohol of virensol C to a ketone, yielding virensol D. Virensol D is further transformed to salicylaldehyde 5-deoxyaurocitrin by the short-chain dehydrogenase virD. VirD catalyzes the dehydrogenation of C-3 to form the beta-ketone aldehyde, which is followed by the generation of the nucleophilic C-2 that is required for the intramolecular aldol condensation between C-2 and C-7, itself followed by dehydration and aromatization which leads to salicylaldehyde 5-deoxyaurocitrin. While the dehydrogenation of virensol D is definitely catalyzed by virD, the aldol condensation and dehydration may be uncatalyzed or assisted by virD. The short chain dehydrogenase virG then converts salicylaldehyde 5-deoxyaurocitrin into virensol B which is further hydroxylated by the cytochrome P450 monooxygenase virE to yield the hydroquinone virensol A. VirI then may oxidize virensol A to form the quinone, while virH performs the epoxidation. Finally, the two remaining short-chain dehydrogenases, virK and virL, are probably responsible for reducing the ketones to the corresponding alcohols to furnish the epoxycyclohexanol structure in trichoxide. In Hypocrea virens (strain Gv29-8 / FGSC 10586) (Gliocladium virens), this protein is Cytochrome P450 monooxygenase virE.